The following is a 20-amino-acid chain: Equinatoxin-1'' (20 aa).

The plays an important role in the hemolytic activity stretch occupies residues 3–12; sequence AVAGAVIEGA. The segment at 11-20 is N-terminal region; sequence GATLTFNVLQ.

This sequence belongs to the actinoporin family. Sea anemone subfamily. In terms of assembly, octamer or nonamer in membranes. Monomer in the soluble state.

The protein localises to the secreted. Its subcellular location is the nematocyst. It is found in the target cell membrane. Functionally, pore-forming protein that forms cations-selective hydrophilic pores of around 1 nm and causes cardiac stimulation and cytolysis. Pore formation is a multi-step process that involves specific recognition of membrane sphingomyelin (but neither cholesterol nor phosphatidylcholine) using aromatic rich region and adjacent phosphocholine (POC) binding site, firm binding to the membrane (mainly driven by hydrophobic interactions) accompanied by the transfer of the N-terminal region to the lipid-water interface and finally pore formation after oligomerization of monomers. Cytolytic effects include red blood cells hemolysis, platelet aggregation and lysis, cytotoxic and cytostatic effects on fibroblasts. Lethality in mammals has been ascribed to severe vasospasm of coronary vessels, cardiac arrhythmia, and inotropic effects. This Actinia equina (Beadlet anemone) protein is Equinatoxin-1''.